A 200-amino-acid chain; its full sequence is Inner membrane-spanning protein YciB (200 aa).

The next 5 membrane-spanning stretches (helical) occupy residues 32 to 52 (FVAT…SYVV), 56 to 76 (VPLM…LTLV), 93 to 113 (LFAV…AILF), 126 to 146 (FLTI…EVIW), and 153 to 173 (FWVA…AMTQ).

Belongs to the YciB family.

The protein localises to the cell inner membrane. Functionally, plays a role in cell envelope biogenesis, maintenance of cell envelope integrity and membrane homeostasis. This Afipia carboxidovorans (strain ATCC 49405 / DSM 1227 / KCTC 32145 / OM5) (Oligotropha carboxidovorans) protein is Inner membrane-spanning protein YciB.